Reading from the N-terminus, the 151-residue chain is MD-2-related lipid-recognition protein (151 aa).

The signal sequence occupies residues 1-18 (MAALHWLLLAALLGCTLA). 3 disulfides stabilise this stretch: Cys-27–Cys-141, Cys-45–Cys-51, and Cys-95–Cys-100. A glycan (N-linked (GlcNAc...) asparagine) is linked at Asn-58.

In terms of processing, N-glycosylated. Hemolymph (at protein level). Constitutively expressed mainly in fat body and also in hemocytes and secreted into hemolymph. Not detected in midgut, epidermis, or Malpighian tubule of naive larvae.

It is found in the secreted. In terms of biological role, binds to lipopolysaccharide from a variety of Gram-negative bacteria and to lipid A. The polypeptide is MD-2-related lipid-recognition protein (Manduca sexta (Tobacco hawkmoth)).